The primary structure comprises 147 residues: Large ribosomal subunit protein bL9 (147 aa).

It belongs to the bacterial ribosomal protein bL9 family.

Its function is as follows. Binds to the 23S rRNA. The protein is Large ribosomal subunit protein bL9 of Sulfurovum sp. (strain NBC37-1).